A 188-amino-acid polypeptide reads, in one-letter code: Elongation factor P (188 aa).

Lys34 is modified (N6-(3,6-diaminohexanoyl)-5-hydroxylysine).

Belongs to the elongation factor P family. In terms of processing, may be beta-lysylated on the epsilon-amino group of Lys-34 by the combined action of EpmA and EpmB, and then hydroxylated on the C5 position of the same residue by EpmC (if this protein is present). Lysylation is critical for the stimulatory effect of EF-P on peptide-bond formation. The lysylation moiety may extend toward the peptidyltransferase center and stabilize the terminal 3-CCA end of the tRNA. Hydroxylation of the C5 position on Lys-34 may allow additional potential stabilizing hydrogen-bond interactions with the P-tRNA.

The protein localises to the cytoplasm. It functions in the pathway protein biosynthesis; polypeptide chain elongation. In terms of biological role, involved in peptide bond synthesis. Alleviates ribosome stalling that occurs when 3 or more consecutive Pro residues or the sequence PPG is present in a protein, possibly by augmenting the peptidyl transferase activity of the ribosome. Modification of Lys-34 is required for alleviation. This Methylococcus capsulatus (strain ATCC 33009 / NCIMB 11132 / Bath) protein is Elongation factor P.